We begin with the raw amino-acid sequence, 69 residues long: A-kinase anchor protein inhibitor 1 (69 aa).

Positions 39–69 are disordered; that stretch reads QESLRREGRPGDSRAWGQLGGCELTKKHEKK. The segment covering 41–50 has biased composition (basic and acidic residues); it reads SLRREGRPGD.

As to quaternary structure, binds cAMP-dependent protein kinase (PKA). Interacts specifically with RII-regulatory subunits of PKA (PRKAR2A and PRKAR2B). As to expression, preferentially expressed in the neural tissues.

Functionally, protein kinase A (PKA)-binding protein. Binds to type II regulatory subunits of protein kinase A (PKA) and may block the A-kinase anchoring protein (AKAP)-mediated subcellular localization of PKA. The protein is A-kinase anchor protein inhibitor 1 of Mus musculus (Mouse).